A 388-amino-acid chain; its full sequence is Methylthioribose-1-phosphate isomerase (388 aa).

The Proton donor role is filled by Asp258.

It belongs to the eIF-2B alpha/beta/delta subunits family. MtnA subfamily.

It is found in the cytoplasm. It localises to the nucleus. The catalysed reaction is 5-(methylsulfanyl)-alpha-D-ribose 1-phosphate = 5-(methylsulfanyl)-D-ribulose 1-phosphate. The protein operates within amino-acid biosynthesis; L-methionine biosynthesis via salvage pathway; L-methionine from S-methyl-5-thio-alpha-D-ribose 1-phosphate: step 1/6. In terms of biological role, catalyzes the interconversion of methylthioribose-1-phosphate (MTR-1-P) into methylthioribulose-1-phosphate (MTRu-1-P). This is Methylthioribose-1-phosphate isomerase (mri-1) from Neurospora crassa (strain ATCC 24698 / 74-OR23-1A / CBS 708.71 / DSM 1257 / FGSC 987).